The chain runs to 180 residues: ATP synthase subunit delta (180 aa).

It belongs to the ATPase delta chain family. In terms of assembly, F-type ATPases have 2 components, F(1) - the catalytic core - and F(0) - the membrane proton channel. F(1) has five subunits: alpha(3), beta(3), gamma(1), delta(1), epsilon(1). F(0) has three main subunits: a(1), b(2) and c(10-14). The alpha and beta chains form an alternating ring which encloses part of the gamma chain. F(1) is attached to F(0) by a central stalk formed by the gamma and epsilon chains, while a peripheral stalk is formed by the delta and b chains.

It is found in the cell inner membrane. In terms of biological role, f(1)F(0) ATP synthase produces ATP from ADP in the presence of a proton or sodium gradient. F-type ATPases consist of two structural domains, F(1) containing the extramembraneous catalytic core and F(0) containing the membrane proton channel, linked together by a central stalk and a peripheral stalk. During catalysis, ATP synthesis in the catalytic domain of F(1) is coupled via a rotary mechanism of the central stalk subunits to proton translocation. Functionally, this protein is part of the stalk that links CF(0) to CF(1). It either transmits conformational changes from CF(0) to CF(1) or is implicated in proton conduction. In Geobacter metallireducens (strain ATCC 53774 / DSM 7210 / GS-15), this protein is ATP synthase subunit delta.